We begin with the raw amino-acid sequence, 354 residues long: Histidinol-phosphate aminotransferase (354 aa).

An N6-(pyridoxal phosphate)lysine modification is found at Lys-210.

It belongs to the class-II pyridoxal-phosphate-dependent aminotransferase family. Histidinol-phosphate aminotransferase subfamily. In terms of assembly, homodimer. Requires pyridoxal 5'-phosphate as cofactor.

The enzyme catalyses L-histidinol phosphate + 2-oxoglutarate = 3-(imidazol-4-yl)-2-oxopropyl phosphate + L-glutamate. Its pathway is amino-acid biosynthesis; L-histidine biosynthesis; L-histidine from 5-phospho-alpha-D-ribose 1-diphosphate: step 7/9. The protein is Histidinol-phosphate aminotransferase of Clostridium botulinum (strain 657 / Type Ba4).